A 267-amino-acid polypeptide reads, in one-letter code: 2-oxoglutarate synthase subunit KorB (267 aa).

In terms of assembly, heterotetramer of the KorA, KorB, KorC and KorD subunits.

The catalysed reaction is 2 oxidized [2Fe-2S]-[ferredoxin] + 2-oxoglutarate + CoA = succinyl-CoA + 2 reduced [2Fe-2S]-[ferredoxin] + CO2 + H(+). This is 2-oxoglutarate synthase subunit KorB (korB) from Archaeoglobus fulgidus (strain ATCC 49558 / DSM 4304 / JCM 9628 / NBRC 100126 / VC-16).